The chain runs to 482 residues: Protein translocase subunit SecY (482 aa).

The disordered stretch occupies residues 1-22; it reads MVIKKPANKVDKKSTFKSSNKK. The next 10 membrane-spanning stretches (helical) occupy residues 41–61, 92–112, 137–157, 177–197, 201–221, 243–263, 303–323, 342–362, 405–425, and 426–446; these read ILFTLLALIIIRLGVYITVPG, FSILALGVSPYITASIIVQLL, LTKIIMIPFALMQAEATIFTL, AFYYILIPLVMLGGSFFMLWI, ITIKGIGNGISIVIFIGIIIS, IFFSGLLNFMIYISVFLLVIL, VIPVIFASAIISTPITISQII, FNTWWGISIFGILIVLFTFLY, VVGSVFLAIIALLPYVISKLT, and QLPSNLAIGGTGLIICISVAI.

This sequence belongs to the SecY/SEC61-alpha family. Component of the Sec protein translocase complex. Heterotrimer consisting of SecY, SecE and SecG subunits. The heterotrimers can form oligomers, although 1 heterotrimer is thought to be able to translocate proteins. Interacts with the ribosome. Interacts with SecDF, and other proteins may be involved. Interacts with SecA.

The protein resides in the cell membrane. In terms of biological role, the central subunit of the protein translocation channel SecYEG. Consists of two halves formed by TMs 1-5 and 6-10. These two domains form a lateral gate at the front which open onto the bilayer between TMs 2 and 7, and are clamped together by SecE at the back. The channel is closed by both a pore ring composed of hydrophobic SecY resides and a short helix (helix 2A) on the extracellular side of the membrane which forms a plug. The plug probably moves laterally to allow the channel to open. The ring and the pore may move independently. The chain is Protein translocase subunit SecY from Mycoplasma capricolum subsp. capricolum (strain California kid / ATCC 27343 / NCTC 10154).